We begin with the raw amino-acid sequence, 180 residues long: ATP-dependent protease subunit HslV (180 aa).

Thr-2 is an active-site residue. Residues Gly-157, Cys-160, and Ser-163 each coordinate Na(+).

This sequence belongs to the peptidase T1B family. HslV subfamily. As to quaternary structure, a double ring-shaped homohexamer of HslV is capped on each side by a ring-shaped HslU homohexamer. The assembly of the HslU/HslV complex is dependent on binding of ATP.

The protein localises to the cytoplasm. It catalyses the reaction ATP-dependent cleavage of peptide bonds with broad specificity.. Its activity is regulated as follows. Allosterically activated by HslU binding. Protease subunit of a proteasome-like degradation complex believed to be a general protein degrading machinery. This is ATP-dependent protease subunit HslV from Wigglesworthia glossinidia brevipalpis.